The chain runs to 306 residues: MDALDKVLKPKTKRAKRFLEKREPKLTENIKNAMLIKGGNANATVTQVLRDMYALKKPYGVLYKKKNITRPFEDQTSLEFFSKKSDCSLFMFGSHNKKRPNNLVIGRMYDYHVLDMIELGIEKFVSLKDIKTSKCPEGTKPMLIFAGDDFDVTEDFRRLKNLLIDFFRGPTVSNVRLAGLEYVLHFTALNGKVYFRSYKLLLKKSGCRTPRIELEEMGPSLDLVMRRTHLASDDLYKLSMKVPKALKPKKRKNISQDTFGTTFGRIHMQKQDLSKLQTRKMKGLKKRPAENGVDDQGKKSKRIKKN.

The 204-residue stretch at Lys-31–Asp-234 folds into the Brix domain. A disordered region spans residues Lys-270 to Asn-306. Basic residues predominate over residues Gln-277 to Lys-286.

Belongs to the RPF2 family. Component of a hexameric 5S RNP precursor complex, composed of 5S RNA, RRS1, RPF2/BXDC1, RPL5, RPL11 and HEATR3; this complex acts as a precursor for ribosome assembly.

It localises to the nucleus. The protein resides in the nucleolus. In terms of biological role, involved in ribosomal large subunit assembly. May regulate the localization of the 5S RNP/5S ribonucleoprotein particle to the nucleolus. This is Ribosome production factor 2 homolog (Rpf2) from Mus musculus (Mouse).